A 543-amino-acid polypeptide reads, in one-letter code: CTP synthase (543 aa).

Residues 1–265 (MTNYIFVTGG…DQLVVDRFGL (265 aa)) are amidoligase domain. A CTP-binding site is contributed by serine 13. Serine 13 contributes to the UTP binding site. Residues 14 to 19 (SLGKGI) and aspartate 71 contribute to the ATP site. Residues aspartate 71 and glutamate 139 each contribute to the Mg(2+) site. Residues 146 to 148 (DIE), 186 to 191 (KTKPTQ), and lysine 222 contribute to the CTP site. UTP is bound by residues 186 to 191 (KTKPTQ) and lysine 222. 238–240 (KDV) contacts ATP. Residues 290–541 (NIGMIGKYVE…VAAAGKYQKE (252 aa)) form the Glutamine amidotransferase type-1 domain. Glycine 351 contacts L-glutamine. Cysteine 378 acts as the Nucleophile; for glutamine hydrolysis in catalysis. Residues 379-382 (LGMQ), glutamate 402, and arginine 469 each bind L-glutamine. Catalysis depends on residues histidine 514 and glutamate 516.

It belongs to the CTP synthase family. As to quaternary structure, homotetramer.

The enzyme catalyses UTP + L-glutamine + ATP + H2O = CTP + L-glutamate + ADP + phosphate + 2 H(+). The catalysed reaction is L-glutamine + H2O = L-glutamate + NH4(+). It carries out the reaction UTP + NH4(+) + ATP = CTP + ADP + phosphate + 2 H(+). Its pathway is pyrimidine metabolism; CTP biosynthesis via de novo pathway; CTP from UDP: step 2/2. Its activity is regulated as follows. Allosterically activated by GTP, when glutamine is the substrate; GTP has no effect on the reaction when ammonia is the substrate. The allosteric effector GTP functions by stabilizing the protein conformation that binds the tetrahedral intermediate(s) formed during glutamine hydrolysis. Inhibited by the product CTP, via allosteric rather than competitive inhibition. Functionally, catalyzes the ATP-dependent amination of UTP to CTP with either L-glutamine or ammonia as the source of nitrogen. Regulates intracellular CTP levels through interactions with the four ribonucleotide triphosphates. The protein is CTP synthase of Alteromonas mediterranea (strain DSM 17117 / CIP 110805 / LMG 28347 / Deep ecotype).